Consider the following 122-residue polypeptide: Large ribosomal subunit protein uL14 (122 aa).

Belongs to the universal ribosomal protein uL14 family. In terms of assembly, part of the 50S ribosomal subunit. Forms a cluster with proteins L3 and L19. In the 70S ribosome, L14 and L19 interact and together make contacts with the 16S rRNA in bridges B5 and B8.

Functionally, binds to 23S rRNA. Forms part of two intersubunit bridges in the 70S ribosome. In Paracoccus denitrificans (strain Pd 1222), this protein is Large ribosomal subunit protein uL14.